The following is a 254-amino-acid chain: MIQMTLIQIDNYGPWTVTPRPRNESDLQILQAELYADLERQFANKKGLVFFTRFDNLLAVTNGIDEEDHLRIQRSIRNRYPITISMGVGAAETPHEAQKLATIALQKEGGAQSSKRKEILAIDSLAPADENNLVQAAHIDINSVTETLTDIESAFDTNFMVNKAQHYLMTKLIKKGALLFFIGGDNFMAPCNGLSEKEIEDILVEINDEIGIGLKAGIGVGRNMEDAAYMADLGLEEIRDHDNGMWTWVIEKEY.

This sequence belongs to the archaeal-type GTP cyclohydrolase family.

It catalyses the reaction GTP + 3 H2O = 2-amino-5-formylamino-6-(5-phospho-D-ribosylamino)pyrimidin-4(3H)-one + 2 phosphate + 2 H(+). In terms of biological role, catalyzes the formation of 2-amino-5-formylamino-6-ribofuranosylamino-4(3H)-pyrimidinone ribonucleotide monophosphate and inorganic phosphate from GTP. Also has an independent pyrophosphate phosphohydrolase activity. In Methanobrevibacter smithii (strain ATCC 35061 / DSM 861 / OCM 144 / PS), this protein is GTP cyclohydrolase III.